Here is a 130-residue protein sequence, read N- to C-terminus: Small ribosomal subunit protein uS11 (130 aa).

This sequence belongs to the universal ribosomal protein uS11 family. As to quaternary structure, part of the 30S ribosomal subunit. Interacts with proteins S7 and S18. Binds to IF-3.

Functionally, located on the platform of the 30S subunit, it bridges several disparate RNA helices of the 16S rRNA. Forms part of the Shine-Dalgarno cleft in the 70S ribosome. The polypeptide is Small ribosomal subunit protein uS11 (Aliarcobacter butzleri (strain RM4018) (Arcobacter butzleri)).